Consider the following 339-residue polypeptide: Protein H339R (339 aa).

The protein belongs to the asfivirus H339R family. As to quaternary structure, interacts with host NACA (alpha chain of nascent polypeptide-associated complex).

The protein resides in the host cytoplasm. It localises to the host nucleus. The protein is Protein H339R of African swine fever virus (isolate Tick/South Africa/Pretoriuskop Pr4/1996) (ASFV).